The chain runs to 170 residues: Adenine phosphoribosyltransferase (170 aa).

The protein belongs to the purine/pyrimidine phosphoribosyltransferase family. As to quaternary structure, homodimer.

It localises to the cytoplasm. The enzyme catalyses AMP + diphosphate = 5-phospho-alpha-D-ribose 1-diphosphate + adenine. The protein operates within purine metabolism; AMP biosynthesis via salvage pathway; AMP from adenine: step 1/1. Its function is as follows. Catalyzes a salvage reaction resulting in the formation of AMP, that is energically less costly than de novo synthesis. In Halothermothrix orenii (strain H 168 / OCM 544 / DSM 9562), this protein is Adenine phosphoribosyltransferase.